Consider the following 146-residue polypeptide: Bradykinin-like neuropeptide (146 aa).

The signal sequence occupies residues 1-24; sequence MTSSIYGFITLSVVALISQTTCRS. Propeptides lie at residues 25-80 and 92-146; these read LDLL…LMEA and LRSY…FRYG.

In terms of tissue distribution, neuron L5.

Its subcellular location is the secreted. Functionally, may have important functions in renal physiology and in animal behavior, as does bradykinin. This Aplysia californica (California sea hare) protein is Bradykinin-like neuropeptide (LUQ-1).